Reading from the N-terminus, the 244-residue chain is UDP-2,3-diacylglucosamine hydrolase (244 aa).

The Mn(2+) site is built by Asp-8, His-10, Asp-41, Asn-79, and His-114. 79–80 (NR) provides a ligand contact to substrate. Positions 122, 160, 164, 167, and 195 each coordinate substrate. The Mn(2+) site is built by His-195 and His-197.

It belongs to the LpxH family. Mn(2+) is required as a cofactor.

It is found in the cell inner membrane. The catalysed reaction is UDP-2-N,3-O-bis[(3R)-3-hydroxytetradecanoyl]-alpha-D-glucosamine + H2O = 2-N,3-O-bis[(3R)-3-hydroxytetradecanoyl]-alpha-D-glucosaminyl 1-phosphate + UMP + 2 H(+). It functions in the pathway glycolipid biosynthesis; lipid IV(A) biosynthesis; lipid IV(A) from (3R)-3-hydroxytetradecanoyl-[acyl-carrier-protein] and UDP-N-acetyl-alpha-D-glucosamine: step 4/6. In terms of biological role, hydrolyzes the pyrophosphate bond of UDP-2,3-diacylglucosamine to yield 2,3-diacylglucosamine 1-phosphate (lipid X) and UMP by catalyzing the attack of water at the alpha-P atom. Involved in the biosynthesis of lipid A, a phosphorylated glycolipid that anchors the lipopolysaccharide to the outer membrane of the cell. The chain is UDP-2,3-diacylglucosamine hydrolase from Hahella chejuensis (strain KCTC 2396).